The primary structure comprises 371 residues: 4-hydroxy-3-methylbut-2-en-1-yl diphosphate synthase (flavodoxin) (371 aa).

Residues C270, C273, C305, and E312 each contribute to the [4Fe-4S] cluster site.

This sequence belongs to the IspG family. [4Fe-4S] cluster serves as cofactor.

The catalysed reaction is (2E)-4-hydroxy-3-methylbut-2-enyl diphosphate + oxidized [flavodoxin] + H2O + 2 H(+) = 2-C-methyl-D-erythritol 2,4-cyclic diphosphate + reduced [flavodoxin]. The protein operates within isoprenoid biosynthesis; isopentenyl diphosphate biosynthesis via DXP pathway; isopentenyl diphosphate from 1-deoxy-D-xylulose 5-phosphate: step 5/6. Its function is as follows. Converts 2C-methyl-D-erythritol 2,4-cyclodiphosphate (ME-2,4cPP) into 1-hydroxy-2-methyl-2-(E)-butenyl 4-diphosphate. The chain is 4-hydroxy-3-methylbut-2-en-1-yl diphosphate synthase (flavodoxin) from Shewanella sediminis (strain HAW-EB3).